The sequence spans 157 residues: Protein-export protein SecB (157 aa).

Belongs to the SecB family. In terms of assembly, homotetramer, a dimer of dimers. One homotetramer interacts with 1 SecA dimer.

It is found in the cytoplasm. One of the proteins required for the normal export of preproteins out of the cell cytoplasm. It is a molecular chaperone that binds to a subset of precursor proteins, maintaining them in a translocation-competent state. It also specifically binds to its receptor SecA. The chain is Protein-export protein SecB from Alcanivorax borkumensis (strain ATCC 700651 / DSM 11573 / NCIMB 13689 / SK2).